The chain runs to 269 residues: uncharacterized protein (269 aa).

This is an uncharacterized protein from Schizosaccharomyces pombe (strain 972 / ATCC 24843) (Fission yeast).